The primary structure comprises 1011 residues: Collagen alpha-2(I) chain (1011 aa).

The tract at residues S1–A1011 is disordered. P10, P13, P35, and P41 each carry 4-hydroxyproline. Positions L28–P67 are enriched in low complexity. At K106 the chain carries 5-hydroxylysine; alternate. Residue K106 is glycosylated (O-linked (Gal...) hydroxylysine; alternate). The span at S167–P182 shows a compositional bias: low complexity. Positions G282–G291 are enriched in gly residues. Low complexity predominate over residues S292 to S302. Residues G323 to G332 show a composition bias toward gly residues. The span at P345–S361 shows a compositional bias: low complexity. 4-hydroxyproline is present on residues P367 and P370. The segment covering L396 to A415 has biased composition (low complexity). Gly residues predominate over residues G464–G473. Low complexity-rich tracts occupy residues P520–P537 and E549–A559. Residues G560 to G578 are compositionally biased toward gly residues. 2 stretches are compositionally biased toward low complexity: residues R588–S635 and V642–A662. Positions K663 to K672 are enriched in basic and acidic residues. Over residues P680–A690 the composition is skewed to low complexity. Positions G700–G709 are enriched in gly residues. Over residues T711–T720 the composition is skewed to low complexity. Positions G757–G766 are enriched in gly residues. 2 stretches are compositionally biased toward low complexity: residues S774–P801 and L809–P819. Gly residues predominate over residues G820–L834. Composition is skewed to low complexity over residues Y843–P856 and E872–P887. The span at R897 to P908 shows a compositional bias: basic and acidic residues. The segment covering S981 to P993 has biased composition (pro residues).

It belongs to the fibrillar collagen family. In terms of assembly, trimers of one alpha 2(I) and two alpha 1(I) chains. Interacts (via C-terminus) with TMEM131 (via PapD-L domain); the interaction is direct and is involved in assembly and TRAPPIII ER-to-Golgi transport complex-dependent secretion of collagen. In terms of processing, prolines at the third position of the tripeptide repeating unit (G-X-Y) are hydroxylated in some or all of the chains. As to expression, expressed in bones.

It is found in the secreted. It localises to the extracellular space. The protein resides in the extracellular matrix. In terms of biological role, type I collagen is a member of group I collagen (fibrillar forming collagen). The protein is Collagen alpha-2(I) chain of Neocnus comes (Miller's Hispaniolan ground sloth).